The sequence spans 406 residues: Probable mannan endo-1,4-beta-mannosidase C (406 aa).

The signal sequence occupies residues 1–20 (MLINFEKVLSLALLAGSVSG). N-linked (GlcNAc...) asparagine glycosylation occurs at N58. Position 80 (W80) interacts with substrate. N-linked (GlcNAc...) asparagine glycosylation is found at N86 and N114. N201 is a binding site for substrate. E202 functions as the Proton donor in the catalytic mechanism. A substrate-binding site is contributed by Y287. E320 functions as the Nucleophile in the catalytic mechanism. A glycan (N-linked (GlcNAc...) asparagine) is linked at N338. Position 362 (W362) interacts with substrate.

It belongs to the glycosyl hydrolase 5 (cellulase A) family.

The protein localises to the secreted. It catalyses the reaction Random hydrolysis of (1-&gt;4)-beta-D-mannosidic linkages in mannans, galactomannans and glucomannans.. In terms of biological role, endo-1,4-mannanase, a crucial enzyme for depolymerization of seed galactomannans and wood galactoglucomannans. This is Probable mannan endo-1,4-beta-mannosidase C (manC) from Aspergillus terreus (strain NIH 2624 / FGSC A1156).